The following is an 88-amino-acid chain: Large ribosomal subunit protein bL31 (88 aa).

The disordered stretch occupies residues 67–88 (MGSVDNATSEKKSATDETSKES). Basic and acidic residues predominate over residues 74 to 88 (TSEKKSATDETSKES).

This sequence belongs to the bacterial ribosomal protein bL31 family. Type A subfamily. Part of the 50S ribosomal subunit.

Functionally, binds the 23S rRNA. The sequence is that of Large ribosomal subunit protein bL31 from Synechococcus sp. (strain CC9311).